The following is a 339-amino-acid chain: MSYSAPSQITQRQLAYFEGKHVLIAGELIDDFPFELAKHCESTSIFTTNYSYYKQFAEHDSIHCYFGSELTETTNADMILLYWPKAKAEAEYLLTMLLAKLGKSTEIVVVGENRSGVKSIEKMFADFGPINKFDSARRCSFYWGQCTEEAPTFNQQDWFKEYQVEFENHTIEVRSLPGVFSHGEFDKGSELLLQTLPALRGHVLDFGCGAGVIGSVMKTINPKIHLDMVDISALAIASSIETLKANNLEGCVFASDVYSDTKENYQFIVSNPPFHAGLKTHYSSTEELLEKAPQNLTHEGQLILVANSFLQYPPIIEKAFGECLTLAKNNKFKIYSAQK.

It belongs to the methyltransferase superfamily. RsmC family. Monomer.

Its subcellular location is the cytoplasm. The catalysed reaction is guanosine(1207) in 16S rRNA + S-adenosyl-L-methionine = N(2)-methylguanosine(1207) in 16S rRNA + S-adenosyl-L-homocysteine + H(+). In terms of biological role, specifically methylates the guanine in position 1207 of 16S rRNA in the 30S particle. This Aliivibrio fischeri (strain MJ11) (Vibrio fischeri) protein is Ribosomal RNA small subunit methyltransferase C.